Reading from the N-terminus, the 229-residue chain is MAGHDSGSAKRGRSPSFGVFVRKPVERAPTKGAGDGAADSEAIRIDAAQPWPDDAVEVGAVVDAYGLKGWVKLVAHAGAGRGGDALLKARDWWLQKGGERKFARVTQAKLHSDAVVAHPAGSVDRDTALALRGFRVFVRRGDFPALAADEFYWVDLIGLDVVNEAGVALGKVADMIDNGVHSIMRVEYPATGKDGRPTTGERLIPFVGVYVKAVEQAAGRIVVDWEADY.

A disordered region spans residues methionine 1–aspartate 39. Positions alanine 148–tyrosine 229 constitute a PRC barrel domain.

It belongs to the RimM family. As to quaternary structure, binds ribosomal protein uS19.

The protein localises to the cytoplasm. In terms of biological role, an accessory protein needed during the final step in the assembly of 30S ribosomal subunit, possibly for assembly of the head region. Essential for efficient processing of 16S rRNA. May be needed both before and after RbfA during the maturation of 16S rRNA. It has affinity for free ribosomal 30S subunits but not for 70S ribosomes. The sequence is that of Ribosome maturation factor RimM from Burkholderia thailandensis (strain ATCC 700388 / DSM 13276 / CCUG 48851 / CIP 106301 / E264).